The following is a 40-amino-acid chain: Large ribosomal subunit protein bL36 (40 aa).

It belongs to the bacterial ribosomal protein bL36 family.

The polypeptide is Large ribosomal subunit protein bL36 (Coxiella burnetii (strain Dugway 5J108-111)).